The sequence spans 77 residues: Small ribosomal subunit protein bS21 (77 aa).

The protein belongs to the bacterial ribosomal protein bS21 family.

The protein is Small ribosomal subunit protein bS21 of Bartonella tribocorum (strain CIP 105476 / IBS 506).